The sequence spans 715 residues: Fatty acid oxidation complex subunit alpha (715 aa).

Residues 1-190 form an enoyl-CoA hydratase/isomerase region; it reads MIYEGKAITV…KVGAVDAVVA (190 aa). Asp-297 lines the substrate pocket. Residues 312–715 are 3-hydroxyacyl-CoA dehydrogenase; sequence HDVKQAAVLG…MAKNGQRFFN (404 aa). Residues Met-325, Asp-344, 401–403, Lys-408, and Ser-430 each bind NAD(+); that span reads VVE. His-451 serves as the catalytic For 3-hydroxyacyl-CoA dehydrogenase activity. Asn-454 provides a ligand contact to NAD(+). Asn-501 and Tyr-660 together coordinate substrate.

It in the N-terminal section; belongs to the enoyl-CoA hydratase/isomerase family. The protein in the C-terminal section; belongs to the 3-hydroxyacyl-CoA dehydrogenase family. In terms of assembly, heterotetramer of two alpha chains (FadB) and two beta chains (FadA).

It catalyses the reaction a (3S)-3-hydroxyacyl-CoA + NAD(+) = a 3-oxoacyl-CoA + NADH + H(+). It carries out the reaction a (3S)-3-hydroxyacyl-CoA = a (2E)-enoyl-CoA + H2O. The catalysed reaction is a 4-saturated-(3S)-3-hydroxyacyl-CoA = a (3E)-enoyl-CoA + H2O. The enzyme catalyses (3S)-3-hydroxybutanoyl-CoA = (3R)-3-hydroxybutanoyl-CoA. It catalyses the reaction a (3Z)-enoyl-CoA = a 4-saturated (2E)-enoyl-CoA. It carries out the reaction a (3E)-enoyl-CoA = a 4-saturated (2E)-enoyl-CoA. The protein operates within lipid metabolism; fatty acid beta-oxidation. Its function is as follows. Involved in the aerobic and anaerobic degradation of long-chain fatty acids via beta-oxidation cycle. Catalyzes the formation of 3-oxoacyl-CoA from enoyl-CoA via L-3-hydroxyacyl-CoA. It can also use D-3-hydroxyacyl-CoA and cis-3-enoyl-CoA as substrate. The polypeptide is Fatty acid oxidation complex subunit alpha (Pseudomonas entomophila (strain L48)).